Consider the following 84-residue polypeptide: Large ribosomal subunit protein bL27 (84 aa).

Positions M1 to L21 are disordered.

Belongs to the bacterial ribosomal protein bL27 family.

This chain is Large ribosomal subunit protein bL27, found in Chloroherpeton thalassium (strain ATCC 35110 / GB-78).